Reading from the N-terminus, the 133-residue chain is Fatty acid-binding protein, heart (133 aa).

Val2 is modified (N-acetylvaline). Thr8 bears the Phosphothreonine mark. Residue Tyr20 is modified to Phosphotyrosine; by Tyr-kinases. Ser23 carries the phosphoserine modification. Thr30 is modified (phosphothreonine). At Ser83 the chain carries Phosphoserine. Residue 127-129 coordinates (9Z)-octadecenoate; sequence RTY. A hexadecanoate-binding site is contributed by 127-129; it reads RTY. 127 to 129 lines the octadecanoate pocket; that stretch reads RTY.

It belongs to the calycin superfamily. Fatty-acid binding protein (FABP) family.

It is found in the cytoplasm. Functionally, FABPs are thought to play a role in the intracellular transport of long-chain fatty acids and their acyl-CoA esters. This chain is Fatty acid-binding protein, heart (FABP3), found in Sus scrofa (Pig).